A 135-amino-acid chain; its full sequence is CTP pyrophosphohydrolase (135 aa).

Residues 2–127 (KMIEVVAAII…DIPLLEAFMA (126 aa)) enclose the Nudix hydrolase domain. Residues 34 to 39 (FAGGKV), arginine 72, and aspartate 118 contribute to the substrate site. Residues 37-58 (GKVEPDESQRQALVRELREELG) carry the Nudix box motif.

The protein belongs to the Nudix hydrolase family. In terms of assembly, monomer. Requires Mg(2+) as cofactor. Mn(2+) serves as cofactor.

It catalyses the reaction CTP + H2O = CMP + diphosphate + H(+). The catalysed reaction is dCTP + H2O = dCMP + diphosphate + H(+). In terms of biological role, hydrolase with a preference for pyrimidine substrates. Has high activity with 5-methyl-dCTP, and much lower activity with CTP, dCTP, 5-hydroxy-dCTP, 2-hydroxy-dATP and 8-hydroxy-dGTP. This chain is CTP pyrophosphohydrolase (nudG), found in Escherichia coli (strain K12).